We begin with the raw amino-acid sequence, 434 residues long: Enolase (434 aa).

Residue glutamine 163 participates in (2R)-2-phosphoglycerate binding. The Proton donor role is filled by glutamate 205. 3 residues coordinate Mg(2+): aspartate 242, glutamate 291, and aspartate 318. Lysine 343, arginine 372, serine 373, and lysine 394 together coordinate (2R)-2-phosphoglycerate. Lysine 343 serves as the catalytic Proton acceptor.

The protein belongs to the enolase family. Mg(2+) is required as a cofactor.

It is found in the cytoplasm. The protein resides in the secreted. The protein localises to the cell surface. The enzyme catalyses (2R)-2-phosphoglycerate = phosphoenolpyruvate + H2O. It functions in the pathway carbohydrate degradation; glycolysis; pyruvate from D-glyceraldehyde 3-phosphate: step 4/5. Catalyzes the reversible conversion of 2-phosphoglycerate (2-PG) into phosphoenolpyruvate (PEP). It is essential for the degradation of carbohydrates via glycolysis. The sequence is that of Enolase from Streptococcus pneumoniae serotype 19F (strain G54).